The sequence spans 632 residues: Threonine--tRNA ligase (632 aa).

A TGS domain is found at 1-61; that stretch reads MPIVTLPDGS…EHDAEVSILT (61 aa). Residues 242 to 533 are catalytic; the sequence is DHRKLARKLD…LIEHYAGSMP (292 aa). Zn(2+)-binding residues include cysteine 333, histidine 384, and histidine 510.

Belongs to the class-II aminoacyl-tRNA synthetase family. In terms of assembly, homodimer. It depends on Zn(2+) as a cofactor.

It localises to the cytoplasm. It catalyses the reaction tRNA(Thr) + L-threonine + ATP = L-threonyl-tRNA(Thr) + AMP + diphosphate + H(+). Catalyzes the attachment of threonine to tRNA(Thr) in a two-step reaction: L-threonine is first activated by ATP to form Thr-AMP and then transferred to the acceptor end of tRNA(Thr). Also edits incorrectly charged L-seryl-tRNA(Thr). The chain is Threonine--tRNA ligase from Chromohalobacter salexigens (strain ATCC BAA-138 / DSM 3043 / CIP 106854 / NCIMB 13768 / 1H11).